The primary structure comprises 144 residues: Large ribosomal subunit protein uL15 (144 aa).

The disordered stretch occupies residues 1–49; it reads MIKLECLQDPSPRKRRTKLLGRGPSSGHGKTSSRGHKGDCSRSGYKRRF.

It belongs to the universal ribosomal protein uL15 family. As to quaternary structure, part of the 50S ribosomal subunit.

Binds to the 23S rRNA. In Chlamydia trachomatis serovar A (strain ATCC VR-571B / DSM 19440 / HAR-13), this protein is Large ribosomal subunit protein uL15.